Consider the following 148-residue polypeptide: FAD synthase (148 aa).

ATP-binding positions include 5 to 6, 10 to 13, Asp-92, and Tyr-119; these read TF and HPGH.

Belongs to the archaeal FAD synthase family. As to quaternary structure, homodimer. A divalent metal cation is required as a cofactor.

The enzyme catalyses FMN + ATP + H(+) = FAD + diphosphate. The protein operates within cofactor biosynthesis; FAD biosynthesis; FAD from FMN: step 1/1. Catalyzes the transfer of the AMP portion of ATP to flavin mononucleotide (FMN) to produce flavin adenine dinucleotide (FAD) coenzyme. The chain is FAD synthase from Methanosphaera stadtmanae (strain ATCC 43021 / DSM 3091 / JCM 11832 / MCB-3).